We begin with the raw amino-acid sequence, 364 residues long: Chorismate synthase (364 aa).

An NADP(+)-binding site is contributed by Arg-47. FMN contacts are provided by residues 125–127, Gly-285, 300–304, and Arg-327; these read RFS and KPTPS.

Belongs to the chorismate synthase family. As to quaternary structure, homotetramer. FMNH2 is required as a cofactor.

The catalysed reaction is 5-O-(1-carboxyvinyl)-3-phosphoshikimate = chorismate + phosphate. The protein operates within metabolic intermediate biosynthesis; chorismate biosynthesis; chorismate from D-erythrose 4-phosphate and phosphoenolpyruvate: step 7/7. In terms of biological role, catalyzes the anti-1,4-elimination of the C-3 phosphate and the C-6 proR hydrogen from 5-enolpyruvylshikimate-3-phosphate (EPSP) to yield chorismate, which is the branch point compound that serves as the starting substrate for the three terminal pathways of aromatic amino acid biosynthesis. This reaction introduces a second double bond into the aromatic ring system. This chain is Chorismate synthase, found in Dehalococcoides mccartyi (strain ATCC BAA-2100 / JCM 16839 / KCTC 5957 / BAV1).